A 109-amino-acid chain; its full sequence is Putative glutaredoxin-C11 (109 aa).

In terms of domain architecture, Glutaredoxin spans 2 to 108; it reads AEMVARLASE…PLLKSAGALW (107 aa). Cys22 and Cys25 are joined by a disulfide. The Responsive for interaction with TGA factors signature appears at 106 to 109; that stretch reads ALWL.

Belongs to the glutaredoxin family. CC-type subfamily.

It localises to the cytoplasm. It is found in the nucleus. Has a glutathione-disulfide oxidoreductase activity in the presence of NADPH and glutathione reductase. Reduces low molecular weight disulfides and proteins. The chain is Putative glutaredoxin-C11 (GRXC11) from Oryza sativa subsp. japonica (Rice).